Here is a 346-residue protein sequence, read N- to C-terminus: Phenylalanine--tRNA ligase alpha subunit (346 aa).

Glutamate 260 contributes to the Mg(2+) binding site.

The protein belongs to the class-II aminoacyl-tRNA synthetase family. Phe-tRNA synthetase alpha subunit type 1 subfamily. In terms of assembly, tetramer of two alpha and two beta subunits. Mg(2+) is required as a cofactor.

The protein resides in the cytoplasm. It carries out the reaction tRNA(Phe) + L-phenylalanine + ATP = L-phenylalanyl-tRNA(Phe) + AMP + diphosphate + H(+). In Herpetosiphon aurantiacus (strain ATCC 23779 / DSM 785 / 114-95), this protein is Phenylalanine--tRNA ligase alpha subunit.